The sequence spans 485 residues: D-alanine--D-alanyl carrier protein ligase (485 aa).

An ATP-binding site is contributed by 144–145 (TS). Asp189 contacts D-alanine. Residue 284-289 (NTYGPT) coordinates ATP. Residue Val293 participates in D-alanine binding. Residues Asp365 and Lys473 each contribute to the ATP site. Lys473 provides a ligand contact to D-alanine.

The protein belongs to the ATP-dependent AMP-binding enzyme family. DltA subfamily.

Its subcellular location is the cytoplasm. The catalysed reaction is holo-[D-alanyl-carrier protein] + D-alanine + ATP = D-alanyl-[D-alanyl-carrier protein] + AMP + diphosphate. The protein operates within cell wall biogenesis; lipoteichoic acid biosynthesis. Functionally, catalyzes the first step in the D-alanylation of lipoteichoic acid (LTA), the activation of D-alanine and its transfer onto the D-alanyl carrier protein (Dcp) DltC. In an ATP-dependent two-step reaction, forms a high energy D-alanyl-AMP intermediate, followed by transfer of the D-alanyl residue as a thiol ester to the phosphopantheinyl prosthetic group of the Dcp. D-alanylation of LTA plays an important role in modulating the properties of the cell wall in Gram-positive bacteria, influencing the net charge of the cell wall. The chain is D-alanine--D-alanyl carrier protein ligase from Staphylococcus aureus (strain bovine RF122 / ET3-1).